The chain runs to 2605 residues: Protein ABERRANT POLLEN TRANSMISSION 1 (2605 aa).

The N-terminal stretch at 1 to 43 (MMLGLVQLLVGFVVAWEAVELVLRHGLLLSVFKLAILAALAAA) is a signal peptide. The segment at 137-158 (STNKKKPAPRKPISTTTAKAKG) is disordered. Asn232, Asn320, Asn348, Asn516, Asn587, Asn628, Asn696, Asn779, Asn1171, Asn1318, and Asn1459 each carry an N-linked (GlcNAc...) asparagine glycan. Positions 305–326 (SASTVAEQKDEPSVDNKSAARS) are disordered. A compositionally biased stretch (basic and acidic residues) spans 311 to 326 (EQKDEPSVDNKSAARS). Residues 1761–1818 (MSKDGALSSVSSTSQPSEPQQIKSSESPPSNGSGKPDLTSSSENALKRSNNSDSEEEG) are disordered. Low complexity predominate over residues 1768 to 1781 (SSVSSTSQPSEPQQ). Residues 1782-1812 (IKSSESPPSNGSGKPDLTSSSENALKRSNNS) show a composition bias toward polar residues. N-linked (GlcNAc...) asparagine glycans are attached at residues Asn1791, Asn1810, Asn2003, Asn2280, and Asn2291. 2 disordered regions span residues 2269-2312 (VSTT…SSFD) and 2332-2361 (EGQTNTQYEPQDAAKDSKLLRPVRSTREDK). Residues 2281 to 2300 (TSVAETNSPNNQSSKETTFA) show a composition bias toward polar residues. Basic and acidic residues-rich tracts occupy residues 2303-2312 (PELRRTSSFD) and 2343-2361 (DAAKDSKLLRPVRSTREDK). Asn2468 and Asn2564 each carry an N-linked (GlcNAc...) asparagine glycan. A disordered region spans residues 2574 to 2605 (TELEVAELPPRAPGYNTDSSSDSSSAETSPKD).

It belongs to the SABRE family. Mature pollen-specific.

The protein resides in the secreted. It localises to the golgi apparatus. May be involved in membrane trafficking. Required for tip growth in pollen tubes and root hairs. This chain is Protein ABERRANT POLLEN TRANSMISSION 1, found in Zea mays (Maize).